Reading from the N-terminus, the 211-residue chain is Troponin I, cardiac muscle (211 aa).

The tract at residues 1-25 (MADESSDAAGEPQPAPAPVRRRSSA) is disordered. N-acetylalanine is present on Ala2. Residues Ser5 and Ser6 each carry the phosphoserine modification. Phosphoserine; by PKA and PKD/PRKD1 occurs at positions 23 and 24. Tyr27 is subject to Phosphotyrosine. At Thr32 the chain carries Phosphothreonine; by STK4/MST1. An involved in binding TNC region spans residues 33-80 (EPHAKKKSKISASRKLQLKTLMLQIAKQEMEREAEERRGEKGRVLSTR). Phosphoserine; by PKC/PRKCE occurs at positions 43 and 45. The residue at position 52 (Thr52) is a Phosphothreonine; by STK4/MST1. Ser78 bears the Phosphoserine mark. Thr79 is modified (phosphothreonine). Thr130 and Thr144 each carry phosphothreonine; by STK4/MST1. The involved in binding TNC and actin stretch occupies residues 130-151 (TQKIYDLRGKFKRPTLRRVRIS). Ser151 carries the post-translational modification Phosphoserine; by PAK3. Phosphoserine is present on residues Ser167 and Ser200.

Belongs to the troponin I family. In terms of assembly, interacts with TRIM63. Binds to actin and tropomyosin. Interacts with STK4/MST1. Phosphorylated at Ser-23 and Ser-24 by PRKD1; phosphorylation reduces myofilament calcium sensitivity. Phosphorylated preferentially at Thr-32. Phosphorylation by STK4/MST1 alters its binding affinity to TNNC1 (cardiac Tn-C) and TNNT2 (cardiac Tn-T). Phosphorylated at Ser-43 and Ser-45 by PRKCE; phosphorylation increases myocardium contractile dysfunction.

Troponin I is the inhibitory subunit of troponin, the thin filament regulatory complex which confers calcium-sensitivity to striated muscle actomyosin ATPase activity. This chain is Troponin I, cardiac muscle (Tnni3), found in Rattus norvegicus (Rat).